The primary structure comprises 264 residues: 2',3'-cyclic-nucleotide 2'-phosphodiesterase (264 aa).

Fe cation contacts are provided by aspartate 8, glutamate 39, asparagine 40, and asparagine 67. Residue histidine 68 is the Proton donor of the active site. Fe cation-binding residues include histidine 150, histidine 175, and histidine 177.

Belongs to the YmdB-like family. In terms of assembly, homodimer. It depends on Fe(2+) as a cofactor. Fe(3+) serves as cofactor.

The protein resides in the cytoplasm. The catalysed reaction is a nucleoside 2',3'-cyclic phosphate + H2O = a nucleoside 3'-phosphate + H(+). Functionally, plays a central, regulatory role in the late adaptive responses and affects the levels of many genes. May act via regulation of cAMP levels. Decreases the expression of motility genes and induces genes involved in biofilm formation, by controlling the expression of SlrR. Required for formation of intercellular nanotubes that bridge neighboring cells to allow molecular exchange. Plays a key role in directing the early stages of colony development. In vitro, has a metal-dependent phosphodiesterase activity against 2',3'-cAMP and 2',3'-cGMP. Also has 3',5'-cyclic-nucleotide phosphodiesterase activity, but cannot use cyclic di-AMP or cyclic di-GMP, and does not have phosphatase activity. The polypeptide is 2',3'-cyclic-nucleotide 2'-phosphodiesterase (ymdB) (Bacillus subtilis (strain 168)).